Here is a 329-residue protein sequence, read N- to C-terminus: MTLRNDWTRDEIQALYDQPFLDLVFEAQSVHRQHFQANTIQVSTLLSIKTGKCPEDCKYCSQSAHYDSKLEAEKRIAVDKVISEAQAAKESGSSRFCMGAAWRNPHERDMPYVLEMVREVKALGLETCMTLGMLNQSQAERLKDAGLDYYNHNLDTSREYYSHIISTRTFDDRLNTLDHVRHAGMKVCSGGIVGLGESRNDRIGLLQELATMPVHPESVPINMLVPIEGTPLAEVEKLDVTEWIRTIAVARIIMPHSYIRLSAGRESLSDSDQALAFMAGANSLFSGEKLLTTPNAGEGKDQILFAKLGLTAEKAKPTVAELSVDAMSA.

Residues 38–262 (NTIQVSTLLS…IMPHSYIRLS (225 aa)) enclose the Radical SAM core domain. C53, C57, and C60 together coordinate [4Fe-4S] cluster. [2Fe-2S] cluster is bound by residues C97, C128, C188, and R260.

This sequence belongs to the radical SAM superfamily. Biotin synthase family. As to quaternary structure, homodimer. [4Fe-4S] cluster serves as cofactor. It depends on [2Fe-2S] cluster as a cofactor.

It carries out the reaction (4R,5S)-dethiobiotin + (sulfur carrier)-SH + 2 reduced [2Fe-2S]-[ferredoxin] + 2 S-adenosyl-L-methionine = (sulfur carrier)-H + biotin + 2 5'-deoxyadenosine + 2 L-methionine + 2 oxidized [2Fe-2S]-[ferredoxin]. It functions in the pathway cofactor biosynthesis; biotin biosynthesis; biotin from 7,8-diaminononanoate: step 2/2. In terms of biological role, catalyzes the conversion of dethiobiotin (DTB) to biotin by the insertion of a sulfur atom into dethiobiotin via a radical-based mechanism. The polypeptide is Biotin synthase (Acinetobacter calcoaceticus).